The primary structure comprises 286 residues: Shikimate dehydrogenase (NADP(+)) (286 aa).

Shikimate is bound by residues 19–21 and threonine 66; that span reads SFS. The active-site Proton acceptor is the lysine 70. Positions 91 and 107 each coordinate shikimate. Residues 129–133 and leucine 229 each bind NADP(+); that span reads GSGGA. Shikimate is bound at residue tyrosine 231. Position 252 (glycine 252) interacts with NADP(+).

The protein belongs to the shikimate dehydrogenase family. In terms of assembly, homodimer.

It catalyses the reaction shikimate + NADP(+) = 3-dehydroshikimate + NADPH + H(+). It participates in metabolic intermediate biosynthesis; chorismate biosynthesis; chorismate from D-erythrose 4-phosphate and phosphoenolpyruvate: step 4/7. Involved in the biosynthesis of the chorismate, which leads to the biosynthesis of aromatic amino acids. Catalyzes the reversible NADPH linked reduction of 3-dehydroshikimate (DHSA) to yield shikimate (SA). The sequence is that of Shikimate dehydrogenase (NADP(+)) from Prochlorococcus marinus (strain MIT 9301).